Reading from the N-terminus, the 1105-residue chain is MPKRDDIEKVLVIGSGPITIGQAAEFDYSGAQAIKALKSLGYRVVVINSNSATIMTDPEFSDAVYIEPLTIDFLEAVIEKERPDALLPTLGGQTALNLAVELFKKGVLCKYDVELIGVKPDTIEKAEDREQFKTAMKNCGLEVLESRLVSSVTEAMDVVREFGYPVVIRPSFTLGGSGGGIAYNLQELKAIVENGLIESPAHTVLIEKSVIGWKEYELEVMKDHEDNFIVVCSIENFDPMGIHTGDSVTVAPAQTLTDVEYQCMRNAARKALSAIGFDAGGCNIQFAVDTYTGKLVIIEMNPRVSRSSALASKATGYPIAKISALLAVGLRLDEIPNSITEQTTAAFEPSIDYVVVKMPRFQMEKFPGAEQKLGTQMKSVGEVMSIGRTFKEALGKAVRSLELDIAPKLDLRNMREHLANPTSERMSYIFAAFRNSLSVDEVHELTFINKWFLTEIEEIMNFEKVLRKKKPKDFGSLKKAKEFGFSDRELAEIYKVQEEEIRKIRHKLGVTPVYKMVDTCSAEFEAKTPYFYSTYNGMENETIPSKRRKIMVLGSGPNRIGQGIEFDYANVHAVWAFQEEGYEVIMVNSNPETVSTDYDISDKLYFEPLTTEDILEIAKIENPDGIVVSFGGQTPLRIARALEKEGLKILAANYELIDLTESRDRFAKFLKQSGLSVPPFSVARSIKEALRAAELIGFPVLIRPSYVLGGRAMAIVDHKKDLLSYISNASLISPDHPLIIDKFLENAVELDVDVISDGENVWIAGLMEQIEKAGIHSGDSACVLPPVSLSDDLIEKIEHLIYRLIKSLKIIGPANIQLAVKDDKVYVIELNLRASRTIPFVSKAIGIPVAKIAAKTIIGKKLSQLLLRYWPYSTKERLVKYEPARSGVLPTPWPEYYSVKEAIIPFNKFSGVDILLGPEMRSTGEVMGIGDDFAEAFAKAQLSADGISTKSLLVTVNDRDKREIVPLVSYLYDLGFEVFATAGTGKILRSMGIAVKNVFKVGEGKPDVVDLIRQGKIGFIVITQSPNRKTSAEINREAENSFADDERTAGYKIRTAAIQCKVPCITTIEAFRAEVSAIRRLKKSTLSVRSLQDIFYAQQNTLLKK.

Residues 1 to 402 are carboxyphosphate synthetic domain; sequence MPKRDDIEKV…ALGKAVRSLE (402 aa). The ATP site is built by Arg129, Arg169, Gly175, Gly176, Lys208, Val210, Glu215, Gly241, Ile242, His243, Gln285, and Glu299. Residues 133–328 enclose the ATP-grasp 1 domain; sequence KTAMKNCGLE…IAKISALLAV (196 aa). Mg(2+)-binding residues include Gln285, Glu299, and Asn301. Residues Gln285, Glu299, and Asn301 each contribute to the Mn(2+) site. The interval 403 to 542 is oligomerization domain; it reads LDIAPKLDLR…STYNGMENET (140 aa). Residues 543 to 945 are carbamoyl phosphate synthetic domain; the sequence is IPSKRRKIMV…AFAKAQLSAD (403 aa). The ATP-grasp 2 domain occupies 667–858; that stretch reads AKFLKQSGLS…VAKIAAKTII (192 aa). The ATP site is built by Arg703, Lys742, Leu744, Glu749, Gly774, Ile775, His776, Ser777, Gln817, and Glu829. Residues Gln817, Glu829, and Asn831 each coordinate Mg(2+). Residues Gln817, Glu829, and Asn831 each contribute to the Mn(2+) site. The MGS-like domain maps to 940-1101; it reads AQLSADGIST…QDIFYAQQNT (162 aa). Residues 946–1105 are allosteric domain; sequence GISTKSLLVT…YAQQNTLLKK (160 aa).

Belongs to the CarB family. As to quaternary structure, composed of two chains; the small (or glutamine) chain promotes the hydrolysis of glutamine to ammonia, which is used by the large (or ammonia) chain to synthesize carbamoyl phosphate. Tetramer of heterodimers (alpha,beta)4. It depends on Mg(2+) as a cofactor. Mn(2+) serves as cofactor.

It catalyses the reaction hydrogencarbonate + L-glutamine + 2 ATP + H2O = carbamoyl phosphate + L-glutamate + 2 ADP + phosphate + 2 H(+). The enzyme catalyses hydrogencarbonate + NH4(+) + 2 ATP = carbamoyl phosphate + 2 ADP + phosphate + 2 H(+). It participates in amino-acid biosynthesis; L-arginine biosynthesis; carbamoyl phosphate from bicarbonate: step 1/1. Its pathway is pyrimidine metabolism; UMP biosynthesis via de novo pathway; (S)-dihydroorotate from bicarbonate: step 1/3. Functionally, large subunit of the glutamine-dependent carbamoyl phosphate synthetase (CPSase). CPSase catalyzes the formation of carbamoyl phosphate from the ammonia moiety of glutamine, carbonate, and phosphate donated by ATP, constituting the first step of 2 biosynthetic pathways, one leading to arginine and/or urea and the other to pyrimidine nucleotides. The large subunit (synthetase) binds the substrates ammonia (free or transferred from glutamine from the small subunit), hydrogencarbonate and ATP and carries out an ATP-coupled ligase reaction, activating hydrogencarbonate by forming carboxy phosphate which reacts with ammonia to form carbamoyl phosphate. The protein is Carbamoyl phosphate synthase large chain of Pseudothermotoga lettingae (strain ATCC BAA-301 / DSM 14385 / NBRC 107922 / TMO) (Thermotoga lettingae).